Reading from the N-terminus, the 169-residue chain is Large ribosomal subunit protein uL10 (169 aa).

It belongs to the universal ribosomal protein uL10 family. Part of the ribosomal stalk of the 50S ribosomal subunit. The N-terminus interacts with L11 and the large rRNA to form the base of the stalk. The C-terminus forms an elongated spine to which L12 dimers bind in a sequential fashion forming a multimeric L10(L12)X complex.

In terms of biological role, forms part of the ribosomal stalk, playing a central role in the interaction of the ribosome with GTP-bound translation factors. The sequence is that of Large ribosomal subunit protein uL10 from Staphylococcus saprophyticus subsp. saprophyticus (strain ATCC 15305 / DSM 20229 / NCIMB 8711 / NCTC 7292 / S-41).